Consider the following 742-residue polypeptide: Envelope glycoprotein H (742 aa).

The first 23 residues, 1 to 23, serve as a signal peptide directing secretion; it reads MRPGLPSYLIILAVCLFSHLLSS. Topologically, residues 24–719 are virion surface; it reads RYGAEAVSEP…VVDATDSRLL (696 aa). 4 N-linked (GlcNAc...) asparagine; by host glycosylation sites follow: Asn-55, Asn-62, Asn-67, and Asn-192. Cys-195 and Cys-211 are joined by a disulfide. Residues 217-280 form an interaction with gL region; it reads YLIDELRYVK…QTEKHELLVL (64 aa). 3 cysteine pairs are disulfide-bonded: Cys-330/Cys-383, Cys-495/Cys-522, and Cys-571/Cys-624. Asn-641 and Asn-700 each carry an N-linked (GlcNAc...) asparagine; by host glycan. The helical transmembrane segment at 720-740 threads the bilayer; that stretch reads MMSVYALSAIIGIYLLYRMLK. The Intravirion portion of the chain corresponds to 741 to 742; it reads TC.

This sequence belongs to the herpesviridae glycoprotein H family. As to quaternary structure, interacts with glycoprotein L (gL); this interaction is necessary for the correct processing and cell surface expression of gH. The heterodimer gH/gL seems to interact with gB trimers during fusion. Forms the envelope pentamer complex (PC) composed of gH, gL, UL128, UL130, and UL131A. The pentamer interacts with host NRP2. Forms the envelope trimer complex composed of gH, gL, and gO. The trimer interacts with host PDGFRA. The trimer also interacts with host EPHA2. The trimer also interacts with host TGFBR3. Interacts with UL116. Post-translationally, N-glycosylated, O-glycosylated, and sialylated.

It is found in the virion membrane. The protein resides in the host cell membrane. The protein localises to the host endosome membrane. Functionally, the heterodimer glycoprotein H-glycoprotein L is required for the fusion of viral and plasma membranes leading to virus entry into the host cell. Following initial binding to host receptor, membrane fusion is mediated by the fusion machinery composed of gB and the heterodimer gH/gL. May also be involved in the fusion between the virion envelope and the outer nuclear membrane during virion morphogenesis. In human cytomegalovirus, forms two distincts complexes to mediate viral entry, a trimer and a pentamer at the surface of the virion envelope. The gH-gL-gO trimer is required for infection in fibroblasts by interacting with host PDGFRA, and in glioblastoma cells by interacting with host EPHA2. Thsi trimer may also be required in other cell types using host TGFBR3. The gH-gL-UL128-UL130-UL131A pentamer is essential for viral entry in epithelial, endothelial and myeloid cells via interaction with host NRP2. This chain is Envelope glycoprotein H, found in Human cytomegalovirus (strain Merlin) (HHV-5).